A 248-amino-acid polypeptide reads, in one-letter code: Probable transcriptional regulatory protein RPD_4171 (248 aa).

Residues 1-22 are disordered; it reads MAGHSQFKNIMHRKGKQDAQRS.

Belongs to the TACO1 family.

It is found in the cytoplasm. The sequence is that of Probable transcriptional regulatory protein RPD_4171 from Rhodopseudomonas palustris (strain BisB5).